A 363-amino-acid polypeptide reads, in one-letter code: Heat-inducible transcription repressor HrcA (363 aa).

Belongs to the HrcA family.

Negative regulator of class I heat shock genes (grpE-dnaK-dnaJ and groELS operons). Prevents heat-shock induction of these operons. The polypeptide is Heat-inducible transcription repressor HrcA (Rhizobium radiobacter (Agrobacterium tumefaciens)).